Consider the following 479-residue polypeptide: Ribulose bisphosphate carboxylase large chain (479 aa).

Residues 1 to 2 constitute a propeptide that is removed on maturation; the sequence is MS. Residues Asn123 and Thr173 each coordinate substrate. The active-site Proton acceptor is the Lys175. Lys177 is a binding site for substrate. The Mg(2+) site is built by Lys201, Asp203, and Glu204. An N6-carboxylysine modification is found at Lys201. The residue at position 208 (Ser208) is a Phosphoserine. Catalysis depends on His294, which acts as the Proton acceptor. 2 residues coordinate substrate: Arg295 and His327. Thr330 is subject to Phosphothreonine. Ser379 is a substrate binding site.

This sequence belongs to the RuBisCO large chain family. Type I subfamily. Heterohexadecamer of 8 large chains and 8 small chains; disulfide-linked. The disulfide link is formed within the large subunit homodimers. Mg(2+) is required as a cofactor. Post-translationally, the disulfide bond which can form in the large chain dimeric partners within the hexadecamer appears to be associated with oxidative stress and protein turnover.

The protein resides in the plastid. Its subcellular location is the chloroplast. The catalysed reaction is 2 (2R)-3-phosphoglycerate + 2 H(+) = D-ribulose 1,5-bisphosphate + CO2 + H2O. It catalyses the reaction D-ribulose 1,5-bisphosphate + O2 = 2-phosphoglycolate + (2R)-3-phosphoglycerate + 2 H(+). Functionally, ruBisCO catalyzes two reactions: the carboxylation of D-ribulose 1,5-bisphosphate, the primary event in carbon dioxide fixation, as well as the oxidative fragmentation of the pentose substrate in the photorespiration process. Both reactions occur simultaneously and in competition at the same active site. The chain is Ribulose bisphosphate carboxylase large chain from Brassica oleracea (Wild cabbage).